A 626-amino-acid chain; its full sequence is Transketolase-like protein 2 (626 aa).

His-37 is a binding site for substrate. Thiamine diphosphate contacts are provided by residues Ser-40, His-77, and 123 to 125; that span reads GSL. Asp-155 lines the Mg(2+) pocket. Thiamine diphosphate-binding residues include Gly-156 and Asn-185. Mg(2+) contacts are provided by Asn-185 and Leu-187. Thiamine diphosphate contacts are provided by Lys-247 and His-261. Residues His-261 and Ser-348 each contribute to the substrate site. Thiamine diphosphate is bound by residues Glu-369 and Phe-395. Residue Glu-369 is the Proton donor of the active site. Substrate is bound by residues His-419 and Asp-427. Gln-431 serves as a coordination point for thiamine diphosphate. Residue Arg-477 participates in substrate binding.

It belongs to the transketolase family. Homodimer. Mg(2+) is required as a cofactor. It depends on Ca(2+) as a cofactor. Requires Mn(2+) as cofactor. The cofactor is Co(2+). Thiamine diphosphate serves as cofactor.

It carries out the reaction D-sedoheptulose 7-phosphate + D-glyceraldehyde 3-phosphate = aldehydo-D-ribose 5-phosphate + D-xylulose 5-phosphate. Plays an essential role in total transketolase activity and cell proliferation in cancer cells; after transfection with anti-TKTL1 siRNA, total transketolase activity dramatically decreases and proliferation was significantly inhibited in cancer cells. Plays a pivotal role in carcinogenesis. This chain is Transketolase-like protein 2 (TKTL2), found in Bos taurus (Bovine).